The chain runs to 303 residues: GMP synthase [glutamine-hydrolyzing] subunit B (303 aa).

The region spanning 1–183 (MDVEKFVENA…LGLPKEISER (183 aa)) is the GMPS ATP-PPase domain. 28 to 34 (SGGVDSS) lines the ATP pocket.

As to quaternary structure, heterodimer composed of a glutamine amidotransferase subunit (A) and a GMP-binding subunit (B).

It catalyses the reaction XMP + L-glutamine + ATP + H2O = GMP + L-glutamate + AMP + diphosphate + 2 H(+). It functions in the pathway purine metabolism; GMP biosynthesis; GMP from XMP (L-Gln route): step 1/1. Its function is as follows. Catalyzes the synthesis of GMP from XMP. In Archaeoglobus fulgidus (strain ATCC 49558 / DSM 4304 / JCM 9628 / NBRC 100126 / VC-16), this protein is GMP synthase [glutamine-hydrolyzing] subunit B (guaAB).